The following is a 179-amino-acid chain: Large ribosomal subunit protein uL5 (179 aa).

This sequence belongs to the universal ribosomal protein uL5 family. In terms of assembly, part of the 50S ribosomal subunit; part of the 5S rRNA/L5/L18/L25 subcomplex. Contacts the 5S rRNA and the P site tRNA. Forms a bridge to the 30S subunit in the 70S ribosome.

Functionally, this is one of the proteins that bind and probably mediate the attachment of the 5S RNA into the large ribosomal subunit, where it forms part of the central protuberance. In the 70S ribosome it contacts protein S13 of the 30S subunit (bridge B1b), connecting the 2 subunits; this bridge is implicated in subunit movement. Contacts the P site tRNA; the 5S rRNA and some of its associated proteins might help stabilize positioning of ribosome-bound tRNAs. The polypeptide is Large ribosomal subunit protein uL5 (Salmonella arizonae (strain ATCC BAA-731 / CDC346-86 / RSK2980)).